The following is a 158-amino-acid chain: Endoribonuclease YbeY (158 aa).

Zn(2+) contacts are provided by H118, H122, and H128.

The protein belongs to the endoribonuclease YbeY family. The cofactor is Zn(2+).

The protein resides in the cytoplasm. Functionally, single strand-specific metallo-endoribonuclease involved in late-stage 70S ribosome quality control and in maturation of the 3' terminus of the 16S rRNA. The protein is Endoribonuclease YbeY of Bartonella henselae (strain ATCC 49882 / DSM 28221 / CCUG 30454 / Houston 1) (Rochalimaea henselae).